Reading from the N-terminus, the 180-residue chain is FMN reductase (NADH) RutF (180 aa).

It belongs to the non-flavoprotein flavin reductase family. RutF subfamily.

It carries out the reaction FMNH2 + NAD(+) = FMN + NADH + 2 H(+). Its function is as follows. Catalyzes the reduction of FMN to FMNH2 which is used to reduce pyrimidine by RutA via the Rut pathway. The chain is FMN reductase (NADH) RutF from Bradyrhizobium diazoefficiens (strain JCM 10833 / BCRC 13528 / IAM 13628 / NBRC 14792 / USDA 110).